A 90-amino-acid polypeptide reads, in one-letter code: Probable Fe(2+)-trafficking protein (90 aa).

It belongs to the Fe(2+)-trafficking protein family.

Could be a mediator in iron transactions between iron acquisition and iron-requiring processes, such as synthesis and/or repair of Fe-S clusters in biosynthetic enzymes. The sequence is that of Probable Fe(2+)-trafficking protein from Pseudomonas putida (strain ATCC 700007 / DSM 6899 / JCM 31910 / BCRC 17059 / LMG 24140 / F1).